The sequence spans 335 residues: MRN complex-interacting protein (335 aa).

Disordered stretches follow at residues 75 to 102 (EEAV…PSKP) and 118 to 194 (QELD…ALST). At Ser-100 the chain carries Phosphoserine. Residues 129 to 142 (TQLSTSAERPSSPA) are compositionally biased toward polar residues. The Nuclear localization signal (NLS) signature appears at 145–148 (RKRK). The span at 177–194 (STGLFGTEQQGTSPALST) shows a compositional bias: polar residues. The necessary for the association with the MRN complex stretch occupies residues 203-230 (FPRWKLPSPVTQVNAPSSKWARFLLAPG). The tract at residues 273-335 (RPPQAIHTTT…TTGEDFDDDL (63 aa)) is disordered. Over residues 286–297 (DRPDRKTREQPR) the composition is skewed to basic and acidic residues.

It belongs to the MRNIP family. As to quaternary structure, associates with the MRE11-RAD50-NBN (MRN) damage-sensing complex; this association is constitutive. Interacts with MRE11. Interacts with NBN. Interacts with RAD50. Post-translationally, phosphorylated; phosphorylation is constitutive and occurs in the absence of any DNA-damaging stimulus. Phosphorylation is necessary for its nuclear retention.

The protein resides in the nucleus. It localises to the nucleoplasm. Its function is as follows. Plays a role in the cellular response to DNA damage and the maintenance of genome stability through its association with the MRN damage-sensing complex. Promotes chromatin loading and activity of the MRN complex to facilitate subsequent ATM-mediated DNA damage response signaling and DNA repair. The polypeptide is MRN complex-interacting protein (Mus musculus (Mouse)).